We begin with the raw amino-acid sequence, 854 residues long: MKKENQVNLGRRQLLKSTAAGTVLTGIGGTLSFTPIVEGIAAELPAPLRRTGVGEWLATTCQGCTSWCAKQIYVMDGRALKVRGNPNSGVHGMSSCPRQHLSLQQVYDPDRLRTPMMRTNPKKGRDQDPKFVPISWDKALDMLADKIIALRVANEPHKYALLRGRYSHINDLLYKKMTNLIGSPNNISHSSVCAEAHKMGPYYLDGNWGYNQYDVKNAKFILSFGADPIASNRQVSFYSQTWGDSLDHAKVVVVDPRLSASAAKAHKWIPIEPGQDSVLALAIAHVALVEGVWHKPFVGDFIEGKNLFKAGKTVSVESFKETHTYGLVEWWNQALKDYTPEWASKITGIDPKTIIAIAKDMGAAAPAVQVWTSRGAVMQARGTYTSISCHALNGLFGGIDSKGGLFPGNKTPLLKEYPEAKAYMDEIAAKGVKKEKIDQRGRLEFPALAKGKSGGGVITANAANGIRNQDPYEIKVMLAYFNNFNFSNPEGQRWDEALSKVDFMAHITTNVSEFSWFADVLLPSSHHMFEKWGVLDSIGNGVAQISIQQPSIKRLWDTRIDESEIPYMLAKKLADKGFDAPWRYINEQIVDPETGKPAADEAEFAKLMVRYLTAPLWKEDASKYGDKLSSWDEFVQKGVWNSSPYKLEARWGKFKTETTKFEFYSKTLEKALQSHADKHKVSIDEVMKACDYQARGHLAFIPHYEEPYRFGDESEFPLLLVDQKSRLNKEGRTANSPWYYEFKDVDPGDVANEDVAKFNPIDGKKFGLKDGDEIRITSPVGMLTCKAKLWEGVRPGTVAKCFGQGHWAYGRYASAKFGVTPRGGSNNDLIADRYDRLSGASAFYGHIRVRVEKV.

Positions 1-41 (MKKENQVNLGRRQLLKSTAAGTVLTGIGGTLSFTPIVEGIA) form a signal peptide, tat-type signal. In terms of domain architecture, 4Fe-4S Mo/W bis-MGD-type spans 54 to 110 (GEWLATTCQGCTSWCAKQIYVMDGRALKVRGNPNSGVHGMSSCPRQHLSLQQVYDPD). [4Fe-4S] cluster is bound by residues Cys61, Cys64, Cys68, and Cys96. An arsenite-binding site is contributed by Arg165. Tyr166 provides a ligand contact to arsenate. His189 is a binding site for arsenite. Position 190 (Ser190) interacts with arsenate. Cys193 lines the Mo-bis(molybdopterin guanine dinucleotide) pocket. Residue Lys198 participates in arsenate binding. Tyr210 lines the arsenite pocket.

The protein belongs to the prokaryotic molybdopterin-containing oxidoreductase family. In terms of assembly, heterodimer composed of one large subunit (ArrA) and one small subunit (ArrB). It depends on [4Fe-4S] cluster as a cofactor. The cofactor is Mo-bis(molybdopterin guanine dinucleotide). Predicted to be exported by the Tat system. The position of the signal peptide cleavage has not been experimentally proven.

It localises to the periplasm. The catalysed reaction is arsenite + A + H2O = arsenate + AH2 + H(+). Its activity is regulated as follows. Phosphate is a competitive inhibitor. In terms of biological role, component of the arsenate respiratory reductase (Arr) complex, which catalyzes the reduction of arsenate (As(V)) to arsenite (As(III)). ArrA is the arsenate-binding subunit. The periplasmic localization of this complex may allow the cell to couple arsenate reduction to energy production before arsenate can be transported to the cell cytoplasm and enter the ars detoxification pathway, an energy-requiring process. This chain is Arsenate respiratory reductase molybdopterin-containing subunit ArrA, found in Shewanella sp. (strain ANA-3).